We begin with the raw amino-acid sequence, 545 residues long: ATP synthase subunit alpha, mitochondrial (545 aa).

A mitochondrion-targeting transit peptide spans 1 to 35; it reads MLARTAAIRSLSRTLINSTKAARPAAAALASTRRL. 2 positions are modified to phosphoserine: Ser57 and Ser178. 206–213 serves as a coordination point for ATP; sequence GDRQTGKT.

It belongs to the ATPase alpha/beta chains family. As to quaternary structure, F-type ATPases have 2 components, CF(1) - the catalytic core - and CF(0) - the membrane proton channel. CF(1) has five subunits: alpha(3), beta(3), gamma(1), delta(1), epsilon(1). CF(0) has three main subunits: a, b and c.

The protein resides in the mitochondrion inner membrane. In terms of biological role, mitochondrial membrane ATP synthase (F(1)F(0) ATP synthase or Complex V) produces ATP from ADP in the presence of a proton gradient across the membrane which is generated by electron transport complexes of the respiratory chain. F-type ATPases consist of two structural domains, F(1) - containing the extramembraneous catalytic core, and F(0) - containing the membrane proton channel, linked together by a central stalk and a peripheral stalk. During catalysis, ATP synthesis in the catalytic domain of F(1) is coupled via a rotary mechanism of the central stalk subunits to proton translocation. Subunits alpha and beta form the catalytic core in F(1). Rotation of the central stalk against the surrounding alpha(3)beta(3) subunits leads to hydrolysis of ATP in three separate catalytic sites on the beta subunits. Subunit alpha does not bear the catalytic high-affinity ATP-binding sites. The sequence is that of ATP synthase subunit alpha, mitochondrial (ATP1) from Saccharomyces cerevisiae (strain ATCC 204508 / S288c) (Baker's yeast).